The primary structure comprises 302 residues: Digeranylgeranylglyceryl phosphate synthase (302 aa).

The next 8 helical transmembrane spans lie at 21–41 (LVVA…IYGG), 43–63 (IVSS…AGGY), 103–123 (IGLI…FAVL), 144–164 (IVIA…ASCM), 167–187 (GKVV…LLVL), 218–238 (AYMA…FPYI), 244–264 (MAYL…LAIL), and 282–302 (ARSA…AGLM).

The protein belongs to the UbiA prenyltransferase family. DGGGP synthase subfamily. It depends on Mg(2+) as a cofactor.

The protein resides in the cell membrane. The catalysed reaction is sn-3-O-(geranylgeranyl)glycerol 1-phosphate + (2E,6E,10E)-geranylgeranyl diphosphate = 2,3-bis-O-(geranylgeranyl)-sn-glycerol 1-phosphate + diphosphate. The protein operates within membrane lipid metabolism; glycerophospholipid metabolism. Its function is as follows. Prenyltransferase that catalyzes the transfer of the geranylgeranyl moiety of geranylgeranyl diphosphate (GGPP) to the C2 hydroxyl of (S)-3-O-geranylgeranylglyceryl phosphate (GGGP). This reaction is the second ether-bond-formation step in the biosynthesis of archaeal membrane lipids. In Hyperthermus butylicus (strain DSM 5456 / JCM 9403 / PLM1-5), this protein is Digeranylgeranylglyceryl phosphate synthase.